The sequence spans 266 residues: Gasdermin bGSDM (266 aa).

The next 4 membrane-spanning stretches (beta stranded) occupy residues L67–I83, K95–Q113, S162–A179, and A187–Y203.

The protein belongs to the bacterial gasdermin family. As to quaternary structure, monomer. Forms large, homooligomeric ring-shaped pores when inserted in membranes.

Its subcellular location is the cytoplasm. The protein resides in the cell inner membrane. Its activity is regulated as follows. The full-length protein before cleavage is inactive: intramolecular interactions between the N-terminal domain and the C-terminal region mediate autoinhibition. The pyroptosis-like-inducing activity is carried by the released N-terminal domain (Gasdermin bGSDM, N-terminus). Precursor of a pore-forming protein involved in defense against bacteriophages. Expression of bGSDM and the neighboring protease gene (Gilli_2517) is not toxic in E.coli. Cleavage of this precursor by its dedicated protease releases the active moiety (gasdermin bGSDM, N-terminus) which inserts into membranes, forming pores and triggering cell death. In terms of biological role, pore-forming protein that causes membrane permeabilization via a pyroptosis-like activity. Makes ring-like pores when released. This is Gasdermin bGSDM from Gillisia limnaea (strain DSM 15749 / LMG 21470 / R-8282).